The primary structure comprises 885 residues: MFEKFTEGAIKVIMLSQEEARRMGHNFVGTEQLLLGIIGQRHGIGARALKKQKVTLKKARREIELYIGRGTGFVASEIPFTPRAKRVLEMAVHEGKDLGQNFVGTEHILLALISESDGVAMRTLDKLGVNIPKLRNLILMYIEENQEEILRPLTQAEKFLLEREKKGSSTPTLDEYSENISKEAVDGKLDPVIGRDKEIHEVIKVLARRRKNNPVLIGEPGVGKTAVAEGLAQLIIAEKAPDFLDGNLLMALDLGSILAGTKYRGEFEERIKRIVEEVQNDSAIILVIDEIHTLVGAGAAEGAVDAANILKPALARGKFRCIGATTIDEYRKYIERDPALERRFQPVHVKEPTVGVTIEILLGLRSKFEEHHTLSYHDKAVEQAAILADKFIADRFLPDKAIDVLDEAGSRVRLENRRLPRGMKRLLKELQDTLRDKEESIKEHDFDIAKQLVDHEMEVRTHIRIMKQSILTNETLGLARKEIDTVLEGDVAEVIAGWTGIPVNKISDSESKRLLTMEETLHERLIGQHHAIVSVSKAIRRARVGLRNPDRPIASFIFAGPTGVGKTELTKALSEYMFGNEDSMIRLDMSEYMEKHTVAKLIGSPPGYVGYNEGGQLTEAVQTKPYSVVLLDEVEKAHPDVFNLLLQILDDGRLTDSKGRTIDFRNTMIIMTTNLGAKIIEKESGIKPKTKQDKPAFRIDESGCLGWEPTPEPIKDSALFEKVTELVNEELKEFFRPEFLNRIDEIIVFNHLTKYDIWEICGLMVKQLQKRLEEKELTLEVDVSVRNLLTEEGYDPVYGARPLRRAVMRLLEDTLAQQCLSKPLYPGTILRVSRVKEEGTLASYTNDVKVEIDYRRVDPRLLEQAEEKKEQNQEETKQNILKTDA.

The Clp R domain occupies 2–145 (FEKFTEGAIK…NLILMYIEEN (144 aa)). Repeat stretches follow at residues 5-70 (FTEG…IGRG) and 80-145 (FTPR…IEEN). ATP contacts are provided by residues 218 to 225 (GEPGVGKT) and 560 to 567 (GPTGVGKT). The segment at 864 to 885 (QAEEKKEQNQEETKQNILKTDA) is disordered.

This sequence belongs to the ClpA/ClpB family.

Its subcellular location is the plastid. The protein localises to the chloroplast. Its function is as follows. May interact with a ClpP-like protease involved in degradation of denatured proteins in the chloroplast. In Trieres chinensis (Marine centric diatom), this protein is ATP-dependent Clp protease ATP-binding subunit ClpA homolog (clpC).